A 1279-amino-acid chain; its full sequence is MENTQVIDWDAEEEEETEISSGSLGYSVEPIGRLRFFSGTHGPERDFPLYLGKNVVGRSPDCSVALPFPSISKQHAVIEISAWNKAPILQDCGSLNGTQIVKPPRVLAPGVSHRLRDQELILFADFPCQYHRLNVPPPLVPRSLLTIEKTPRIRGRSQNSRVLLAEDSEEEGDFPSGRSVANGSRNTASPSATVVPESDEEGSSPGPSVPGPSSPFGLGSDTDESQGQQPGVEESSLADNSGAAGEPEQPEVNGVTTGTLAQPTKDKFKDTKMKEEAGSAGVPVGSVVEGSPTLGEDSDTEADEERQPSGSGDSDTDVEEERVPVKKNQVLLGVGIGGPGARGVAHLQDSPTGSDTDVEEDKTALAAPPERSHTAMVINSDTDEEERGEEEEVSAALTLARLKERGIALWSGEPGTEEVKSQPQVLVERSQSASGRDSDTDVEEGSSGGKREIVPDSPMDVDETLTVTQPESQPPCRPNDVDEDVDMSSPGSHLEGKKASSALVDKNRAQVEEEVPGPSVTLGEKHQVPLEGAQPPEEARETAVQEGSSSPVADIRMSQQPVAEDAGTECAAAVSEQKSALEVGAQSRSPAAPVEQVVVRTDTSGDPTLPQREGAQTPTGREREAHVGGTKHAKECCDEPEDLCLSATQCFVEGESQHPGAVQSLEDEPTQVFPCLPQEPGPSHLSLPTPGADTLDVPWEVLATQPFCLREQTETSEPIDTHEAHGSQPSLPGEPPGHQHPVPTSLDHTELLRIDDREMQTVEKAMGHLSCQMMPDGKASGDDPEPSDHRLFSPVPEASASPQSLLTSQSQKQSTPQPMFPTSSSELALPETLHTKPNVRPRRSSRMTPSPHSSAALKPYTTCPTNQPAASRPTSRPTRGRANRSSTRTPELIVPTGPELQPSTSTEQPGIPNLTSQVTEGRAHSTSVNMPEPVLTGPEAQPLTSAEQSVTSNLNPRAQPLTLEPVPQTSHQRRRRATGKQGSRTAPVGPKSYSTPAEPEPQSSASQSSGASEADSPHQKRPRRQVTQKTVVVKEEDPGEIQVKEEPQETAIPTPGKRKRDPAEGETQGNPTRSRRTKPNQEAAAPKVLFTGVVDSRGERAVLALGGSLASSVNEASHLVTDRIRRTVKFLCAVGKGIPILSLNWLYQSRKAGCFLPPDDYLVTDPEQEKNFSFSLRDSLSRARERRLLEDYEIHVTPGVQPPPPQMGEIISCCGGTVLPSMPHSYKLHRVVITCTEDLPRCAIASRLGLPLLSPEFLLTGVLKQEATPEAFVLSNLEM.

A disordered region spans residues 1 to 22; it reads MENTQVIDWDAEEEEETEISSG. The interaction with CHEK2 stretch occupies residues 1-150; sequence MENTQVIDWD…PRSLLTIEKT (150 aa). The tract at residues 2–222 is interaction with the MRN complex; sequence ENTQVIDWDA…SSPFGLGSDT (221 aa). Phosphothreonine is present on Thr4. Positions 9 to 18 are enriched in acidic residues; sequence WDAEEEEETE. The FHA domain maps to 54–105; sequence NVVGRSPDCSVALPFPSISKQHAVIEISAWNKAPILQDCGSLNGTQIVKPPR. Thr146 carries the phosphothreonine modification. Disordered regions lie at residues 156–394, 409–634, and 714–744; these read RSQN…EEVS, LWSG…KHAK, and ETSEPIDTHEAHGSQPSLPGEPPGHQHPVPT. Phosphoserine is present on residues Ser168 and Ser176. Positions 179 to 192 are enriched in polar residues; the sequence is SVANGSRNTASPSA. A phosphoserine mark is found at Ser198 and Ser220. Thr222 is subject to Phosphothreonine. Positions 264-277 are enriched in basic and acidic residues; that stretch reads TKDKFKDTKMKEEA. Residues 278-292 show a composition bias toward low complexity; sequence GSAGVPVGSVVEGSP. A Phosphoserine modification is found at Ser298. Thr300 carries the phosphothreonine modification. Residue Ser314 is modified to Phosphoserine. A Phosphothreonine modification is found at Thr316. Residues Ser350 and Ser354 each carry the phosphoserine modification. Thr356 carries the phosphothreonine modification. Residues Ser372 and Ser380 each carry the phosphoserine modification. The span at 381-393 shows a compositional bias: acidic residues; the sequence is DTDEEERGEEEEV. The residue at position 382 (Thr382) is a Phosphothreonine. Phosphoserine occurs at positions 394, 411, 421, 434, and 438. The segment covering 421-435 has biased composition (polar residues); sequence SQPQVLVERSQSASG. Thr440 carries the post-translational modification Phosphothreonine. At Ser457 the chain carries Phosphoserine. Phosphothreonine is present on Thr466. Ser488, Ser489, Ser550, Ser587, and Ser589 each carry phosphoserine. The span at 545–561 shows a compositional bias: polar residues; sequence QEGSSSPVADIRMSQQP. Residues 620–634 show a composition bias toward basic and acidic residues; it reads GREREAHVGGTKHAK. Phosphoserine occurs at positions 730 and 745. Lys764 carries the N6-acetyllysine modification. Residues 772-1086 are disordered; the sequence is QMMPDGKASG…TKPNQEAAAP (315 aa). Ser793, Ser801, and Ser824 each carry phosphoserine. Residues 798 to 817 are compositionally biased toward low complexity; it reads ASASPQSLLTSQSQKQSTPQ. Polar residues-rich tracts occupy residues 862-889, 901-929, and 942-956; these read TCPTNQPAASRPTSRPTRGRANRSSTRT, QPSTSTEQPGIPNLTSQVTEGRAHSTSVN, and PLTSAEQSVTSNLNP. Thr889 bears the Phosphothreonine mark. Thr951 carries the post-translational modification Phosphothreonine. A Glycyl lysine isopeptide (Lys-Gly) (interchain with G-Cter in SUMO2) cross-link involves residue Lys991. Positions 994-1014 are enriched in low complexity; sequence STPAEPEPQSSASQSSGASEA. Phosphoserine occurs at positions 1008, 1009, 1012, and 1016. A compositionally biased stretch (basic and acidic residues) spans 1032-1047; it reads VVKEEDPGEIQVKEEP. Residue Lys1034 forms a Glycyl lysine isopeptide (Lys-Gly) (interchain with G-Cter in SUMO1); alternate linkage. Lys1034 participates in a covalent cross-link: Glycyl lysine isopeptide (Lys-Gly) (interchain with G-Cter in SUMO2); alternate. Thr1054 carries the phosphothreonine modification. BRCT domains are found at residues 1085 to 1163 and 1184 to 1275; these read APKV…DYLV and RERR…FVLS.

In terms of assembly, homodimer. Interacts with H2AX, which requires phosphorylation of H2AX on 'Ser-139'. Interacts with the MRN complex, composed of MRE11, RAD50, and NBN. Interacts with CHEK2, which requires ATM-mediated phosphorylation of 'Thr-68' within the FHA domain of CHEK2. Interacts constitutively with the BRCA1-BARD1 complex, SMC1A and TP53BP1. Interacts with ATM and FANCD2, and these interactions are reduced upon DNA damage. Also interacts with the PRKDC complex, composed of XRCC6/KU70, XRCC5/KU80 and PRKDC/XRCC7. This interaction may be required for PRKDC autophosphorylation, which is essential for DNA double strand break (DSB) repair. When phosphorylated by ATM, interacts with RNF8 (via FHA domain). Interacts with CEP164. When phosphorylated, interacts with APTX (via FHA-like domain). Interacts (when phosphorylated) with TOPBP1; promoting TOPBP1 localization to DNA damage sites during mitosis. Interacts (when phosphorylated) with NBN; promoting NBN and MRN complex localization to DNA damage sites. Phosphorylated upon exposure to ionizing radiation (IR), ultraviolet radiation (UV), and hydroxyurea (HU). Phosphorylation in response to IR requires ATM, NBN, and possibly CHEK2. Also phosphorylated during the G2/M phase of the cell cycle and during activation of the mitotic spindle checkpoint. Phosphorylation at Thr-4 by ATM stabilizes and enhances homodimerization via the FHA domain. Phosphorylated at Ser-168 and Ser-198 by CK2 in response to DNA damage during mitosis, promoting interaction with TOPBP1. Phosphorylated by CK2 in response to DNA damage, promoting interaction with NBN and recruitment of the MRN complex to DNA damage sites. Post-translationally, sumoylation at Lys-1034 by PIAS4 following DNA damage promotes ubiquitin-mediated degradation. In terms of processing, ubiquitinated by RNF4, leading to proteasomal degradation; undergoes 'Lys-48'-linked polyubiquitination.

It localises to the nucleus. The protein localises to the chromosome. Histone reader protein required for checkpoint-mediated cell cycle arrest in response to DNA damage within both the S phase and G2/M phases of the cell cycle. Specifically recognizes and binds histone H2AX phosphorylated at 'Ser-139', a marker of DNA damage, serving as a scaffold for the recruitment of DNA repair and signal transduction proteins to discrete foci of DNA damage sites. Also required for downstream events subsequent to the recruitment of these proteins. These include phosphorylation and activation of the ATM, CHEK1 and CHEK2 kinases, and stabilization of TP53/p53 and apoptosis. ATM and CHEK2 may also be activated independently by a parallel pathway mediated by TP53BP1. Required for chromosomal stability during mitosis by promoting recruitment of TOPBP1 to DNA double strand breaks (DSBs): TOPBP1 forms filamentous assemblies that bridge MDC1 and tether broken chromosomes during mitosis. Required for the repair of DSBs via homologous recombination by promoting recruitment of NBN component of the MRN complex to DSBs. The sequence is that of Mediator of DNA damage checkpoint protein 1 (Mdc1) from Rattus norvegicus (Rat).